Consider the following 1184-residue polypeptide: Protein stu1 (1184 aa).

HEAT repeat units follow at residues 92-130 (FCPV…EHYV) and 162-194 (RSYV…FQGA). Composition is skewed to basic and acidic residues over residues 229–240 (SSTARPRSRVEP) and 308–317 (EAEKAPHMET). The interval 229–336 (SSTARPRSRV…APQPLHAETS (108 aa)) is disordered. Residues 463 to 499 (VTYTPRLLQHVTSACQDKNAQLRLFAAGWLKTLLNKQ) form an HEAT 3 repeat. 2 disordered regions span residues 564 to 584 (LEKD…SDTL) and 602 to 906 (ARLA…RVEE). Polar residues predominate over residues 572–584 (NRDQSSYLSSDTL). Positions 640-649 (APLSSLSSAP) are enriched in low complexity. Over residues 723-737 (SASNENETQVATQVA) the composition is skewed to polar residues. Basic and acidic residues-rich tracts occupy residues 787–811 (AGRH…ENKL) and 882–895 (EQDR…DSAE).

This sequence belongs to the CLASP family. In terms of assembly, interacts with microtubules.

Its subcellular location is the cytoplasm. The protein resides in the cytoskeleton. The protein localises to the nucleus. It is found in the spindle. Functionally, microtubule binding protein that promotes the stabilization of dynamic microtubules. Required for mitotic spindle formation. In Aspergillus oryzae (strain ATCC 42149 / RIB 40) (Yellow koji mold), this protein is Protein stu1 (stu1).